Here is a 461-residue protein sequence, read N- to C-terminus: Cysteine--tRNA ligase (461 aa).

C28 provides a ligand contact to Zn(2+). The short motif at 30–40 (ITVYDLCHIGH) is the 'HIGH' region element. Residues C209, H234, and E238 each coordinate Zn(2+). Residues 266–270 (KMSKS) carry the 'KMSKS' region motif. K269 is a binding site for ATP.

Belongs to the class-I aminoacyl-tRNA synthetase family. In terms of assembly, monomer. Requires Zn(2+) as cofactor.

It localises to the cytoplasm. It carries out the reaction tRNA(Cys) + L-cysteine + ATP = L-cysteinyl-tRNA(Cys) + AMP + diphosphate. In Shigella flexneri, this protein is Cysteine--tRNA ligase.